The primary structure comprises 1447 residues: MAHSKTRTNDGKITYPPGVKEISDKISKEEMVRRLKMVVKTFMDMDQDSEEEKELYLNLALHLASDFFLKHPDKDVRLLVACCLADIFRIYAPEAPYTSPDKLKDIFMFITRQLKGLEDTKSPQFNRYFYLLENIAWVKSYNICFELEDSNEIFTQLYRTLFSVINNGHNQKVHMHMVDLMSSIICEGDTVSQELLDTVLVNLVPAHKNLNKQAYDLAKALLKRTAQAIEPYITNFFNQVLMLGKTSISDLSEHVFDLILELYNIDSHLLLSVLPQLEFKLKSNDNEERLQVVKLLAKMFGAKDSELASQNKPLWQCYLGRFNDIHVPIRLECVKFASHCLMNHPDLAKDLTEYLKVRSHDPEEAIRHDVIVSIVTAAKKDILLVNDHLLNFVRERTLDKRWRVRKEAMMGLAQIYKKYALQSAAGKDAAKQIAWIKDKLLHIYYQNSIDDRLLVERIFAQYMVPHNLETTERMKCLYYLYATLDLNAVKALNEMWKCQNLLRHQVKDLLDLIKQPKTDASVKAIFSKVMVITRNLPDPGKAQDFMKKFTQVLEDDEKIRKQLEVLVSPTCSCKQAEGCVREITKKLGNPKQPTNPFLEMIKFLLERIAPVHIDTESISALIKQVNKSIDGTADDEDEGVPTDQAIRAGLELLKVLSFTHPISFHSAETFESLLACLKMDDEKVAEAALQIFKNTGSKIEEDFPHIRSALLPVLHHKSKKGPPRQAKYAIHCIHAIFSSKETQFAQIFEPLHKSLDPSNLEHLITPLVTIGHIALLAPDQFAAPLKSLVATFIVKDLLMNDRLPGKKTTKLWVPDEEVSPETMVKIQAIKMMVRWLLGMKNNHSKSGTSTLRLLTTILHSDGDLTEQGKISKPDMSRLRLAAGSAIVKLAQEPCYHEIITLEQYQLCALAINDECYQVRQVFAQKLHKGLSRLRLPLEYMAICALCAKDPVKERRAHARQCLVKNINVRREYLKQHAAVSEKLLSLLPEYVVPYTIHLLAHDPDYVKVQDIEQLKDVKECLWFVLEILMAKNENNSHAFIRKMVENIKQTKDAQGPDDAKMNEKLYTVCDVAMNIIMSKSTTYSLESPKDPVLPARFFTQPDKNFSNTKNYLPPEMKSFFTPGKPKTTNVLGAVNKPLSSAGKQSQTKSSRMETVSNASSSSNPSSPGRIKGRLDSSEMDHSENEDYTMSSPLPGKKSDKRDDSDLVRSELEKPRGRKKTPVTEQEEKLGMDDLTKLVQEQKPKGSQRSRKRGHTASESDEQQWPEEKRLKEDILENEDEQNSPPKKGKRGRPPKPLGGGTPKEEPTMKTSKKGSKKKSGPPAPEEEEEEERQSGNTEQKSKSKQHRVSRRAQQRAESPESSAIESTQSTPQKGRGRPSKTPSPSQPKKNVRVGRSKQAATKENDSSEEVDVFQGSSPVDDIPQEETEEEEVSTVNVRRRSAKRERR.

The stretch at 383 to 419 is one HEAT repeat; it reads LLVNDHLLNFVRERTLDKRWRVRKEAMMGLAQIYKKY. The segment at 1117–1447 is disordered; that stretch reads KSFFTPGKPK…RRRSAKRERR (331 aa). Position 1136 is an N6-acetyllysine (Lys-1136). Residues 1137-1155 are compositionally biased toward polar residues; the sequence is PLSSAGKQSQTKSSRMETV. Residues Ser-1140, Ser-1162, Ser-1166, Ser-1176, Ser-1182, and Ser-1191 each carry the phosphoserine modification. The segment covering 1156 to 1167 has biased composition (low complexity); sequence SNASSSSNPSSP. The segment covering 1172–1184 has biased composition (basic and acidic residues); sequence GRLDSSEMDHSEN. Composition is skewed to basic and acidic residues over residues 1196–1214 and 1225–1243; these read KKSDKRDDSDLVRSELEKP and QEEKLGMDDLTKLVQEQKP. Residues 1245–1254 are compositionally biased toward basic residues; that stretch reads GSQRSRKRGH. The a.T hook 1 DNA-binding region spans 1249 to 1261; the sequence is SRKRGHTASESDE. The residue at position 1255 (Thr-1255) is a Phosphothreonine. A phosphoserine mark is found at Ser-1257 and Ser-1259. Over residues 1265 to 1274 the composition is skewed to basic and acidic residues; it reads PEEKRLKEDI. Ser-1283 carries the phosphoserine modification. The segment at residues 1287–1299 is a DNA-binding region (a.T hook 2); sequence KGKRGRPPKPLGG. The span at 1310-1319 shows a compositional bias: basic residues; sequence TSKKGSKKKS. Residues Ser-1319 and Ser-1334 each carry the phosphoserine modification. Residues 1342-1353 are compositionally biased toward basic residues; the sequence is KSKQHRVSRRAQ. Polar residues predominate over residues 1355-1372; it reads RAESPESSAIESTQSTPQ. A phosphoserine mark is found at Ser-1358 and Ser-1366. Thr-1367 carries the post-translational modification Phosphothreonine. Ser-1369 carries the phosphoserine modification. Residues Thr-1370 and Thr-1381 each carry the phosphothreonine modification. The a.T hook 3 DNA-binding region spans 1372-1384; sequence QKGRGRPSKTPSP. The span at 1379–1388 shows a compositional bias: low complexity; it reads SKTPSPSQPK. 2 positions are modified to phosphoserine: Ser-1383 and Ser-1417. A compositionally biased stretch (acidic residues) spans 1422–1432; that stretch reads IPQEETEEEEV. Basic residues predominate over residues 1437–1447; sequence VRRRSAKRERR.

Belongs to the PDS5 family. In terms of assembly, interacts with the cohesin complex. Interacts with RAD21; the interaction is direct. Interacts with WAPL (via FGF motifs) or CDCA5 (via the FGF motif); the interaction is direct, cohesin-dependent and competitive. In terms of tissue distribution, widely expressed.

It localises to the nucleus. Regulator of sister chromatid cohesion in mitosis which may stabilize cohesin complex association with chromatin. May couple sister chromatid cohesion during mitosis to DNA replication. Cohesion ensures that chromosome partitioning is accurate in both meiotic and mitotic cells and plays an important role in DNA repair. Plays a role in androgen-induced proliferative arrest in prostate cells. This is Sister chromatid cohesion protein PDS5 homolog B (PDS5B) from Homo sapiens (Human).